Reading from the N-terminus, the 211-residue chain is Suppressor of RNA silencing p3 (211 aa).

The protein belongs to the tenuiviruses p3 protein family. As to quaternary structure, homodimer.

The protein localises to the host cytoplasm. In terms of biological role, acts as a suppressor of RNA-mediated gene silencing, also known as post-transcriptional gene silencing (PTGS), presumably through the binding of dsRNA. The protein is Suppressor of RNA silencing p3 of Avena sativa (Oat).